Consider the following 167-residue polypeptide: Leukotoxin-activating lysine-acyltransferase LktC serotype T3 (167 aa).

Catalysis depends on residues histidine 22 and aspartate 91.

This sequence belongs to the RTX toxin acyltransferase family.

The protein localises to the cytoplasm. It catalyses the reaction a fatty acyl-[ACP] + L-lysyl-[protein] = N(6)-(fatty acyl)-L-lysyl-[protein] + holo-[ACP] + H(+). Functionally, involved in fatty acylation of the protoxin (LktA) at two internal lysine residues, thereby converting it to the active toxin. This Mannheimia haemolytica (Pasteurella haemolytica) protein is Leukotoxin-activating lysine-acyltransferase LktC serotype T3 (lktC).